We begin with the raw amino-acid sequence, 172 residues long: MKREKKEQVVQSVTEKVSRSQGIYLTEFQGLSVSRMSELRNEFRKAGVEYRVVKNTLVKKALSDLAGADRLAGALKNTTGVAFGYDDPIAPARVIKKFSKDNESLKFKMAAIDGVVFEADQLGVLSEMLTKTENIGRAAGIINNVIASVPMVMNAVMRDLVSVVDQVGKQKQ.

Belongs to the universal ribosomal protein uL10 family. Part of the ribosomal stalk of the 50S ribosomal subunit. The N-terminus interacts with L11 and the large rRNA to form the base of the stalk. The C-terminus forms an elongated spine to which L12 dimers bind in a sequential fashion forming a multimeric L10(L12)X complex.

In terms of biological role, forms part of the ribosomal stalk, playing a central role in the interaction of the ribosome with GTP-bound translation factors. The protein is Large ribosomal subunit protein uL10 of Chlorobium phaeovibrioides (strain DSM 265 / 1930) (Prosthecochloris vibrioformis (strain DSM 265)).